We begin with the raw amino-acid sequence, 228 residues long: Large ribosomal subunit protein bL25 (228 aa).

Residues 198 to 228 form a disordered region; that stretch reads AAIAEAQSAEAAEEKAEAEAEATNEKNDTEE. The segment covering 209 to 228 has biased composition (basic and acidic residues); sequence AEEKAEAEAEATNEKNDTEE.

The protein belongs to the bacterial ribosomal protein bL25 family. CTC subfamily. In terms of assembly, part of the 50S ribosomal subunit; part of the 5S rRNA/L5/L18/L25 subcomplex. Contacts the 5S rRNA. Binds to the 5S rRNA independently of L5 and L18.

Its function is as follows. This is one of the proteins that binds to the 5S RNA in the ribosome where it forms part of the central protuberance. The polypeptide is Large ribosomal subunit protein bL25 (Methylorubrum populi (strain ATCC BAA-705 / NCIMB 13946 / BJ001) (Methylobacterium populi)).